A 400-amino-acid polypeptide reads, in one-letter code: Elongation factor Tu (400 aa).

Residues Lys10 to Arg210 enclose the tr-type G domain. The tract at residues Gly19–Thr26 is G1. Gly19–Thr26 contributes to the GTP binding site. Thr26 provides a ligand contact to Mg(2+). The tract at residues Gly60 to Ala64 is G2. The interval Asp81–Gly84 is G3. GTP is bound by residues Asp81–His85 and Asn136–Asp139. A G4 region spans residues Asn136–Asp139. The interval Ser174 to Ile176 is G5.

Belongs to the TRAFAC class translation factor GTPase superfamily. Classic translation factor GTPase family. EF-Tu/EF-1A subfamily. Monomer.

The protein localises to the cytoplasm. It catalyses the reaction GTP + H2O = GDP + phosphate + H(+). GTP hydrolase that promotes the GTP-dependent binding of aminoacyl-tRNA to the A-site of ribosomes during protein biosynthesis. The sequence is that of Elongation factor Tu from Dehalococcoides mccartyi (strain ATCC BAA-2266 / KCTC 15142 / 195) (Dehalococcoides ethenogenes (strain 195)).